The chain runs to 435 residues: Fibrous sheath-interacting protein 1 (435 aa).

Disordered stretches follow at residues 1-109 (MPMD…DPKL) and 354-393 (SQSHKGDMECDANEERNTEPTPGEKILRDRKEQRDRESRL). A compositionally biased stretch (low complexity) spans 18–32 (SSSRSRPGSRSSNGS). Polar residues predominate over residues 50 to 63 (KLNSGQEGHTSNSG). The span at 64-87 (VEERRNSNDAKWADDSKTKPAKES) shows a compositional bias: basic and acidic residues. 2 positions are modified to phosphoserine: S87 and S88. Positions 108-154 (KLEETNAVLQNAIRKMHRLDKLLAKKQCREKEVKKQGLEMRVKLWEE) form a coiled coil. Basic and acidic residues-rich tracts occupy residues 355–371 (QSHKGDMECDANEERNT) and 378–393 (KILRDRKEQRDRESRL).

It belongs to the FSIP1 family. May interact with AKAP4. In terms of tissue distribution, detected in male germ cells and testis.

This is Fibrous sheath-interacting protein 1 (Fsip1) from Mus musculus (Mouse).